Here is a 205-residue protein sequence, read N- to C-terminus: Holliday junction branch migration complex subunit RuvA (205 aa).

The domain I stretch occupies residues methionine 1–proline 64. The tract at residues serine 65–alanine 143 is domain II. The interval lysine 144–threonine 153 is flexible linker. The segment at threonine 153–arginine 205 is domain III.

It belongs to the RuvA family. Homotetramer. Forms an RuvA(8)-RuvB(12)-Holliday junction (HJ) complex. HJ DNA is sandwiched between 2 RuvA tetramers; dsDNA enters through RuvA and exits via RuvB. An RuvB hexamer assembles on each DNA strand where it exits the tetramer. Each RuvB hexamer is contacted by two RuvA subunits (via domain III) on 2 adjacent RuvB subunits; this complex drives branch migration. In the full resolvosome a probable DNA-RuvA(4)-RuvB(12)-RuvC(2) complex forms which resolves the HJ.

The protein resides in the cytoplasm. In terms of biological role, the RuvA-RuvB-RuvC complex processes Holliday junction (HJ) DNA during genetic recombination and DNA repair, while the RuvA-RuvB complex plays an important role in the rescue of blocked DNA replication forks via replication fork reversal (RFR). RuvA specifically binds to HJ cruciform DNA, conferring on it an open structure. The RuvB hexamer acts as an ATP-dependent pump, pulling dsDNA into and through the RuvAB complex. HJ branch migration allows RuvC to scan DNA until it finds its consensus sequence, where it cleaves and resolves the cruciform DNA. In Beijerinckia indica subsp. indica (strain ATCC 9039 / DSM 1715 / NCIMB 8712), this protein is Holliday junction branch migration complex subunit RuvA.